Reading from the N-terminus, the 179-residue chain is Inosine/xanthosine triphosphatase (179 aa).

Residue Glu71 coordinates Mg(2+). 71–72 (EA) contributes to the substrate binding site.

Belongs to the YjjX NTPase family. Homodimer. Mg(2+) is required as a cofactor. Requires Mn(2+) as cofactor.

The enzyme catalyses XTP + H2O = XDP + phosphate + H(+). The catalysed reaction is ITP + H2O = IDP + phosphate + H(+). In terms of biological role, phosphatase that hydrolyzes non-canonical purine nucleotides such as XTP and ITP to their respective diphosphate derivatives. Probably excludes non-canonical purines from DNA/RNA precursor pool, thus preventing their incorporation into DNA/RNA and avoiding chromosomal lesions. The polypeptide is Inosine/xanthosine triphosphatase (Shewanella oneidensis (strain ATCC 700550 / JCM 31522 / CIP 106686 / LMG 19005 / NCIMB 14063 / MR-1)).